The following is a 659-amino-acid chain: Acetyl-coenzyme A synthetase (659 aa).

CoA is bound by residues 206–209 (RRGK) and Thr-324. Residues 400–402 (GEP), 424–429 (DTWWQT), Asp-516, Arg-531, and Arg-542 contribute to the ATP site. Val-553 and His-555 together coordinate Mg(2+). Arg-600 serves as a coordination point for CoA.

It belongs to the ATP-dependent AMP-binding enzyme family. Requires Mg(2+) as cofactor.

It carries out the reaction acetate + ATP + CoA = acetyl-CoA + AMP + diphosphate. Its function is as follows. Catalyzes the conversion of acetate into acetyl-CoA (AcCoA), an essential intermediate at the junction of anabolic and catabolic pathways. AcsA undergoes a two-step reaction. In the first half reaction, AcsA combines acetate with ATP to form acetyl-adenylate (AcAMP) intermediate. In the second half reaction, it can then transfer the acetyl group from AcAMP to the sulfhydryl group of CoA, forming the product AcCoA. The chain is Acetyl-coenzyme A synthetase (acsA) from Methanothrix thermoacetophila (strain DSM 6194 / JCM 14653 / NBRC 101360 / PT) (Methanosaeta thermophila).